We begin with the raw amino-acid sequence, 90 residues long: MEYSYPLNPDWTTEEMTIVVQFLEAIERAYEKGIDTLELKEKYRAFKQVVPAKGEEKRIGIDFEKASGYSAYKVMQLVKNATTSKIKMQP.

This sequence belongs to the UPF0223 family.

The sequence is that of UPF0223 protein lmo1058 from Listeria monocytogenes serovar 1/2a (strain ATCC BAA-679 / EGD-e).